Consider the following 943-residue polypeptide: Netrin receptor UNC5B-a (943 aa).

The N-terminal stretch at 1–30 (MYLSRNPSGAALAAILVALILSCNFPSSTA) is a signal peptide. Over 31–380 (GIEYSDVLPD…LESTGDVALY (350 aa)) the chain is Extracellular. Residues 51 to 148 (PHFLLEPEDA…AGTTKSKRSY (98 aa)) enclose the Ig-like domain. 9 disulfides stabilise this stretch: cysteine 72-cysteine 133, cysteine 84-cysteine 131, cysteine 177-cysteine 228, cysteine 261-cysteine 298, cysteine 265-cysteine 302, cysteine 276-cysteine 288, cysteine 317-cysteine 351, cysteine 321-cysteine 356, and cysteine 329-cysteine 341. Residues 150 to 245 (RIAYLRKNFD…KRRSTTATVI (96 aa)) form the Ig-like C2-type domain. Asparagine 225 carries N-linked (GlcNAc...) asparagine glycosylation. TSP type-1 domains lie at 249–303 (NGGW…TMCP) and 305–357 (DGGW…GLCM). N-linked (GlcNAc...) asparagine glycosylation occurs at asparagine 350. A helical membrane pass occupies residues 381 to 401 (AGLVVAIFIVIILLMAVGIVV). The Cytoplasmic portion of the chain corresponds to 402–943 (YRRNCREFDT…MLVMATDGDC (542 aa)). A ZU5 domain is found at 542 to 685 (NSVTGTFGSL…LGTYAFVGES (144 aa)). Positions 688–836 (RSAIKRLQLA…LEENVKSFDP (149 aa)) are UPA domain. One can recognise a Death domain in the interval 863–941 (KICNSLDAPN…EMMLVMATDG (79 aa)).

This sequence belongs to the unc-5 family. Interacts (via extracellular domain) with flrt3 (via extracellular domain). Interacts with rnd1. Post-translationally, phosphorylated on cytoplasmic tyrosine residues. In terms of tissue distribution, in the developing visual system, it is expressed within the developing optic vesicles and later become restricted to the dorsal ciliary marginal zone, a site of retinoblast proliferation and differentiation.

Its subcellular location is the cell membrane. In terms of biological role, plays a role in cell-cell adhesion during embryonic development. Receptor for netrin required for axon guidance. Mediates axon repulsion of neuronal growth cones in the developing nervous system upon ligand binding. The chain is Netrin receptor UNC5B-a (unc5b-a) from Xenopus laevis (African clawed frog).